A 995-amino-acid polypeptide reads, in one-letter code: DExH-box ATP-dependent RNA helicase DExH1 (995 aa).

2 disordered regions span residues 1-42 (MPPH…EQRW) and 156-192 (KTTQESGSSGASASAFNDQQDRTSTLGLKRPDSASKL). Over residues 25-37 (RGGGGRGGGGGGR) the composition is skewed to gly residues. Low complexity predominate over residues 161-170 (SGSSGASASA). Over residues 171-181 (FNDQQDRTSTL) the composition is skewed to polar residues. The 168-residue stretch at 238 to 405 (LNSVSQNQVL…FGNSPTMHIP (168 aa)) folds into the Helicase ATP-binding domain. Residue 251–258 (GETGCGKT) participates in ATP binding. Positions 352–355 (DEIH) match the DEIH box motif. Residues 429–450 (SSDSGNYQGSSRGRRRESESKK) are disordered. Residues 484–663 (QIDVDLVEAT…ELCLHIKSLQ (180 aa)) form the Helicase C-terminal domain.

It belongs to the DExH box helicase family.

The catalysed reaction is ATP + H2O = ADP + phosphate + H(+). The sequence is that of DExH-box ATP-dependent RNA helicase DExH1 from Arabidopsis thaliana (Mouse-ear cress).